A 404-amino-acid chain; its full sequence is Keratin, type I cuticular Ha3-I (404 aa).

A head region spans residues 1–56; that stretch reads MSYSCGLPNLSCRTSCSSRPCVPPSCHGCTLPGACNIPANVSNCNWFCEGSFNGSE. An IF rod domain is found at 56 to 367; sequence EKETMQFLND…SLLESEDCKL (312 aa). The interval 57–91 is coil 1A; the sequence is KETMQFLNDRLASYLEKVRQLERDNAELENLIRER. The linker 1 stretch occupies residues 92–102; it reads SQQQEPLVCAS. Residues 103–203 form a coil 1B region; sequence YQSYFKTIEE…HEQEVNTLRC (101 aa). The tract at residues 204-219 is linker 12; the sequence is QLGGRLNVEVDAAPAV. Positions 220 to 363 are coil 2; the sequence is DLNQVLNETR…NTYRSLLESE (144 aa). The tail stretch occupies residues 364–404; that stretch reads DCKLPSNPCAITNACDKSTGPCISNPCGPRARCGPCNTFGY.

It belongs to the intermediate filament family.

The protein is Keratin, type I cuticular Ha3-I of Pan troglodytes (Chimpanzee).